Consider the following 293-residue polypeptide: Nitrogenase iron protein (293 aa).

10 to 17 (GKGGIGKS) contacts ATP. Residue C98 coordinates [4Fe-4S] cluster. At R101 the chain carries ADP-ribosylarginine; by dinitrogenase reductase ADP-ribosyltransferase. C133 provides a ligand contact to [4Fe-4S] cluster.

Belongs to the NifH/BchL/ChlL family. Homodimer. It depends on [4Fe-4S] cluster as a cofactor. The reversible ADP-ribosylation of Arg-101 inactivates the nitrogenase reductase and regulates nitrogenase activity.

It carries out the reaction N2 + 8 reduced [2Fe-2S]-[ferredoxin] + 16 ATP + 16 H2O = H2 + 8 oxidized [2Fe-2S]-[ferredoxin] + 2 NH4(+) + 16 ADP + 16 phosphate + 6 H(+). Its function is as follows. The key enzymatic reactions in nitrogen fixation are catalyzed by the nitrogenase complex, which has 2 components: the iron protein and the molybdenum-iron protein. The polypeptide is Nitrogenase iron protein (Klebsiella pneumoniae (strain 342)).